Here is a 177-residue protein sequence, read N- to C-terminus: 18.9 kDa heat shock protein (177 aa).

A disordered region spans residues 1–35 (MSMITSMLGRKQNAQQKGGGGGGRTGGGGGGEIEP). The segment covering 17-32 (KGGGGGGRTGGGGGGE) has biased composition (gly residues). The sHSP domain occupies 63–177 (AAGVPSTASM…PHARIIPITN (115 aa)).

The protein belongs to the small heat shock protein (HSP20) family. As to quaternary structure, may form oligomeric structures.

It localises to the cytoplasm. The polypeptide is 18.9 kDa heat shock protein (HSP18.9) (Oryza sativa subsp. japonica (Rice)).